The chain runs to 308 residues: Oligopeptide transport ATP-binding protein AmiF (308 aa).

The ABC transporter domain maps to valine 6 to leucine 251. Glycine 42–threonine 49 is an ATP binding site.

The protein belongs to the ABC transporter superfamily.

It is found in the cell membrane. Functionally, part of the binding-protein-dependent transport system for oligopeptides. Probably responsible for energy coupling to the transport system. This is Oligopeptide transport ATP-binding protein AmiF (amiF) from Streptococcus pneumoniae serotype 4 (strain ATCC BAA-334 / TIGR4).